The primary structure comprises 638 residues: Chaperone protein DnaK (638 aa).

A Phosphothreonine; by autocatalysis modification is found at threonine 198. The interval 602 to 638 (QAKSQAQGGEEAQAKDAGQSNDDVVDAEFEEVKDDKK) is disordered. The segment covering 624-638 (DVVDAEFEEVKDDKK) has biased composition (acidic residues).

This sequence belongs to the heat shock protein 70 family.

Its function is as follows. Acts as a chaperone. The polypeptide is Chaperone protein DnaK (Shewanella denitrificans (strain OS217 / ATCC BAA-1090 / DSM 15013)).